The following is a 360-amino-acid chain: Phospho-N-acetylmuramoyl-pentapeptide-transferase (360 aa).

Helical transmembrane passes span 21–41 (YVTFRAILGLLTAMVFSLWWG), 74–94 (MGGLLILAGVFISVLLWGDLG), 97–117 (YVWVMLFVLGAFGLIGFIDDY), 134–154 (YILQSLAALAIAFYLYASAGS), 168–188 (VMPQLGAFFILLAYFTIVGSS), 199–219 (GLAIMPTVMVAAAFALIAYLS), 236–256 (SGELVIVCTAIVGAGLGFLWF), 263–283 (VFMGDVGSLSLGAALGTIAVL), 288–308 (ILLVIMGGVFVMETVSVILQV), and 338–358 (VIVRFWIISLFLVLLGLATLK).

The protein belongs to the glycosyltransferase 4 family. MraY subfamily. Mg(2+) is required as a cofactor.

The protein resides in the cell inner membrane. The enzyme catalyses UDP-N-acetyl-alpha-D-muramoyl-L-alanyl-gamma-D-glutamyl-meso-2,6-diaminopimeloyl-D-alanyl-D-alanine + di-trans,octa-cis-undecaprenyl phosphate = di-trans,octa-cis-undecaprenyl diphospho-N-acetyl-alpha-D-muramoyl-L-alanyl-D-glutamyl-meso-2,6-diaminopimeloyl-D-alanyl-D-alanine + UMP. Its pathway is cell wall biogenesis; peptidoglycan biosynthesis. Catalyzes the initial step of the lipid cycle reactions in the biosynthesis of the cell wall peptidoglycan: transfers peptidoglycan precursor phospho-MurNAc-pentapeptide from UDP-MurNAc-pentapeptide onto the lipid carrier undecaprenyl phosphate, yielding undecaprenyl-pyrophosphoryl-MurNAc-pentapeptide, known as lipid I. This Shewanella loihica (strain ATCC BAA-1088 / PV-4) protein is Phospho-N-acetylmuramoyl-pentapeptide-transferase.